The chain runs to 446 residues: Radical S-adenosyl methionine domain-containing protein 1, mitochondrial (446 aa).

The 263-residue stretch at Lys-15 to Gln-277 folds into the Radical SAM core domain. [4Fe-4S] cluster contacts are provided by Cys-34, Cys-38, and Cys-41. S-adenosyl-L-methionine-binding positions include Gly-94, Gly-95–Thr-96, Glu-130, Gln-159, Arg-171, and Asp-195.

Belongs to the anaerobic coproporphyrinogen-III oxidase family. HemW subfamily.

The protein resides in the mitochondrion. In terms of biological role, may be a heme chaperone, appears to bind heme. Homologous bacterial proteins do not have oxygen-independent coproporphyrinogen-III oxidase activity. Binds 1 [4Fe-4S] cluster. The cluster is coordinated with 3 cysteines and an exchangeable S-adenosyl-L-methionine. The protein is Radical S-adenosyl methionine domain-containing protein 1, mitochondrial (rsad1) of Dictyostelium discoideum (Social amoeba).